A 461-amino-acid polypeptide reads, in one-letter code: ATP synthase subunit beta (461 aa).

Position 151-158 (151-158 (GGAGVGKT)) interacts with ATP.

This sequence belongs to the ATPase alpha/beta chains family. F-type ATPases have 2 components, CF(1) - the catalytic core - and CF(0) - the membrane proton channel. CF(1) has five subunits: alpha(3), beta(3), gamma(1), delta(1), epsilon(1). CF(0) has three main subunits: a(1), b(2) and c(9-12). The alpha and beta chains form an alternating ring which encloses part of the gamma chain. CF(1) is attached to CF(0) by a central stalk formed by the gamma and epsilon chains, while a peripheral stalk is formed by the delta and b chains.

The protein resides in the cell inner membrane. The enzyme catalyses ATP + H2O + 4 H(+)(in) = ADP + phosphate + 5 H(+)(out). Its function is as follows. Produces ATP from ADP in the presence of a proton gradient across the membrane. The catalytic sites are hosted primarily by the beta subunits. This chain is ATP synthase subunit beta, found in Idiomarina loihiensis (strain ATCC BAA-735 / DSM 15497 / L2-TR).